We begin with the raw amino-acid sequence, 65 residues long: Muscarinic toxin-like protein 1 (65 aa).

Intrachain disulfides connect C3–C24, C17–C42, C46–C57, and C58–C63.

The protein belongs to the three-finger toxin family. Short-chain subfamily. Type C muscarinic toxin sub-subfamily. As to quaternary structure, monomer. In terms of tissue distribution, expressed by the venom gland.

Its subcellular location is the secreted. In terms of biological role, binds weakly to the muscarinic acetylcholine receptor (CHRM). The protein is Muscarinic toxin-like protein 1 of Naja kaouthia (Monocled cobra).